Reading from the N-terminus, the 215-residue chain is MTDTPSNTDPLQSAIAPDFSSVPTQALDALRMKFSQLTASLSKIRDEMSRAELPQWYTLQAQLTVTLSQLSSLTNTLDHYEETLDATVAYPLPSFPTTAHEGLITTLMRKKNIPEVDEWIKDAKETNGLDVDSLSDAEIKKLINKDKDITSWATKCLLDERAKHSYTGLYTTKERQTESIDDRDNLYTSSVSNVKTSRPFSVDKVLKFVNQGESY.

Residues 27–89 (LDALRMKFSQ…YEETLDATVA (63 aa)) are a coiled coil.

It belongs to the Mediator complex subunit 8 family. As to quaternary structure, component of the Mediator complex.

It is found in the nucleus. Its function is as follows. Component of the Mediator complex, a coactivator involved in the regulated transcription of nearly all RNA polymerase II-dependent genes. Mediator functions as a bridge to convey information from gene-specific regulatory proteins to the basal RNA polymerase II transcription machinery. Mediator is recruited to promoters by direct interactions with regulatory proteins and serves as a scaffold for the assembly of a functional preinitiation complex with RNA polymerase II and the general transcription factors. The chain is Mediator of RNA polymerase II transcription subunit 8 (MED8) from Kluyveromyces lactis (strain ATCC 8585 / CBS 2359 / DSM 70799 / NBRC 1267 / NRRL Y-1140 / WM37) (Yeast).